We begin with the raw amino-acid sequence, 812 residues long: Lon protease (812 aa).

Residues 22–215 (YAVLPLRDIV…KALSFMEAEI (194 aa)) enclose the Lon N-terminal domain. ATP is bound at residue 367 to 374 (GPPGVGKT). A Lon proteolytic domain is found at 602 to 783 (EDQVGVVTGL…GEVLKHALVR (182 aa)). Residues Ser-689 and Lys-732 contribute to the active site. Residues 787–812 (PIEWTEQENPTAVPPVEDEAGASLAH) are disordered.

It belongs to the peptidase S16 family. In terms of assembly, homohexamer. Organized in a ring with a central cavity.

It is found in the cytoplasm. It carries out the reaction Hydrolysis of proteins in presence of ATP.. Its function is as follows. ATP-dependent serine protease that mediates the selective degradation of mutant and abnormal proteins as well as certain short-lived regulatory proteins. Required for cellular homeostasis and for survival from DNA damage and developmental changes induced by stress. Degrades polypeptides processively to yield small peptide fragments that are 5 to 10 amino acids long. Binds to DNA in a double-stranded, site-specific manner. Required for wild-type virulence during the initial stages of infection in the mouse model, but not essential for the establishment and maintenance of chronic infection in this host. This Brucella abortus (strain 2308) protein is Lon protease.